Consider the following 510-residue polypeptide: Catalase (510 aa).

An N-terminal signal peptide occupies residues 1–26 (MPLLNWSRHMVCLTAAGLITVPTVYA). Catalysis depends on residues H78 and N150. Y358 lines the heme pocket. The span at 386–400 (NQDGALNTGHTTSGV) shows a compositional bias: polar residues. The segment at 386–412 (NQDGALNTGHTTSGVNYEPSRLEPRPA) is disordered.

The protein belongs to the catalase family. Heme serves as cofactor.

The protein resides in the periplasm. It catalyses the reaction 2 H2O2 = O2 + 2 H2O. In terms of biological role, decomposes hydrogen peroxide into water and oxygen; serves to protect cells from the toxic effects of hydrogen peroxide. This chain is Catalase (katB), found in Pseudomonas syringae pv. syringae.